Here is a 291-residue protein sequence, read N- to C-terminus: Pyridoxal 5'-phosphate synthase subunit PdxS (291 aa).

Asp-23 is a D-ribose 5-phosphate binding site. Lys-80 functions as the Schiff-base intermediate with D-ribose 5-phosphate in the catalytic mechanism. Gly-152 lines the D-ribose 5-phosphate pocket. Arg-164 is a binding site for D-glyceraldehyde 3-phosphate. Residues Gly-213 and 234-235 (GS) each bind D-ribose 5-phosphate.

It belongs to the PdxS/SNZ family. As to quaternary structure, in the presence of PdxT, forms a dodecamer of heterodimers.

The enzyme catalyses aldehydo-D-ribose 5-phosphate + D-glyceraldehyde 3-phosphate + L-glutamine = pyridoxal 5'-phosphate + L-glutamate + phosphate + 3 H2O + H(+). Its pathway is cofactor biosynthesis; pyridoxal 5'-phosphate biosynthesis. Functionally, catalyzes the formation of pyridoxal 5'-phosphate from ribose 5-phosphate (RBP), glyceraldehyde 3-phosphate (G3P) and ammonia. The ammonia is provided by the PdxT subunit. Can also use ribulose 5-phosphate and dihydroxyacetone phosphate as substrates, resulting from enzyme-catalyzed isomerization of RBP and G3P, respectively. The sequence is that of Pyridoxal 5'-phosphate synthase subunit PdxS from Haemophilus influenzae (strain ATCC 51907 / DSM 11121 / KW20 / Rd).